We begin with the raw amino-acid sequence, 313 residues long: Cadmium, cobalt and zinc/H(+)-K(+) antiporter (313 aa).

The Extracellular segment spans residues 1-14; sequence MGHNHNHAGGSNKK. Residues 15-35 traverse the membrane as a helical segment; the sequence is VLLISFIMITGYMIIEAIGGF. Residues 36-45 are Cytoplasmic-facing; it reads LTNSLALLSD. Residues 46–66 form a helical membrane-spanning segment; sequence AGHMLSDSISLMVALIAFKLA. Residues 67 to 80 are Extracellular-facing; it reads EKKASHHKTFGYKR. A helical transmembrane segment spans residues 81 to 101; the sequence is FEILAAVINGVALILISLYII. Topologically, residues 102–117 are cytoplasmic; the sequence is YEAIKRFSHPPEVATT. Residues 118 to 138 traverse the membrane as a helical segment; sequence GMLTISIIGLAVNILVAWIML. Over 139-159 the chain is Extracellular; sequence NGGDTKNNLNIRGAYLHVISD. Residues 160–180 traverse the membrane as a helical segment; the sequence is MLGSIGAILAAILIIFFGWSW. The Cytoplasmic portion of the chain corresponds to 181–313; the sequence is ADPAASVIVA…TENPRDHHHH (133 aa).

This sequence belongs to the cation diffusion facilitator (CDF) transporter (TC 2.A.4) family. SLC30A subfamily.

It is found in the cell membrane. In terms of biological role, involved in divalent cation and potassium homeostasis in the cell. Catalyzes the active efflux of zinc, cadmium and cobalt, in exchange for potassium and H(+) ions. The chain is Cadmium, cobalt and zinc/H(+)-K(+) antiporter (czcD) from Bacillus velezensis (strain DSM 23117 / BGSC 10A6 / LMG 26770 / FZB42) (Bacillus amyloliquefaciens subsp. plantarum).